Consider the following 275-residue polypeptide: Putative pyruvate, phosphate dikinase regulatory protein (275 aa).

151-158 (GVSRTSKT) is a binding site for ADP.

Belongs to the pyruvate, phosphate/water dikinase regulatory protein family. PDRP subfamily.

The enzyme catalyses N(tele)-phospho-L-histidyl/L-threonyl-[pyruvate, phosphate dikinase] + ADP = N(tele)-phospho-L-histidyl/O-phospho-L-threonyl-[pyruvate, phosphate dikinase] + AMP + H(+). It catalyses the reaction N(tele)-phospho-L-histidyl/O-phospho-L-threonyl-[pyruvate, phosphate dikinase] + phosphate + H(+) = N(tele)-phospho-L-histidyl/L-threonyl-[pyruvate, phosphate dikinase] + diphosphate. In terms of biological role, bifunctional serine/threonine kinase and phosphorylase involved in the regulation of the pyruvate, phosphate dikinase (PPDK) by catalyzing its phosphorylation/dephosphorylation. The sequence is that of Putative pyruvate, phosphate dikinase regulatory protein from Rhodospirillum rubrum (strain ATCC 11170 / ATH 1.1.1 / DSM 467 / LMG 4362 / NCIMB 8255 / S1).